Here is a 485-residue protein sequence, read N- to C-terminus: Sphingosine kinase 1 (485 aa).

Positions 116–258 (GRPKKLLVFV…LDVATISQGT (143 aa)) constitute a DAGKc domain. ATP is bound by residues 126–128 (NPF) and T158. 183-186 (SGDG) provides a ligand contact to substrate. The active-site Proton donor/acceptor is the D185. ATP-binding positions include E190 and 215–217 (GSG). D276 lines the substrate pocket. ATP is bound by residues R283, R289, and 446–448 (DGE).

It depends on Mg(2+) as a cofactor. Highly expressed in stems and flowers and at lower levels in roots, leaves and siliques.

The protein localises to the vacuole membrane. It catalyses the reaction a sphingoid base + ATP = a sphingoid 1-phosphate + ADP + H(+). Activated by phosphatidic acid (PA). Binding with PA stimulates the activity by promoting the binding of substrate to the catalytic site. Its function is as follows. Involved in the production of sphingolipid metabolites. Phosphorylates sphingosine and various sphingoid long-chain base (LCB) products, such as phytosphingosine (PHS, 4-hydroxysphinganine), 4-hydroxy-8-sphingenine, 4,8-sphingadienine, D-erythro-dihydrosphingosine and D,L-threo-dihydrosphingosine. Is required for abscisic acid (ABA) signaling that mediates stomatal closure, inhibition of seed germination and root elongation. May function upstream of PLDALPHA1 and phosphatidic acid (PA) in an amplification response to ABA that mediates stomatal closure. The protein is Sphingosine kinase 1 (SPHK1) of Arabidopsis thaliana (Mouse-ear cress).